The following is a 550-amino-acid chain: Urocanate hydratase (550 aa).

NAD(+)-binding positions include 48–49 (GG), glutamine 126, 172–174 (GMG), glutamate 192, arginine 197, 238–239 (NA), 259–263 (QTSAH), 268–269 (YL), and tyrosine 317. Residue cysteine 405 is part of the active site. Glycine 487 contacts NAD(+).

Belongs to the urocanase family. NAD(+) serves as cofactor.

The protein resides in the cytoplasm. It carries out the reaction 4-imidazolone-5-propanoate = trans-urocanate + H2O. Its pathway is amino-acid degradation; L-histidine degradation into L-glutamate; N-formimidoyl-L-glutamate from L-histidine: step 2/3. In terms of biological role, catalyzes the conversion of urocanate to 4-imidazolone-5-propionate. The protein is Urocanate hydratase of Saccharopolyspora erythraea (strain ATCC 11635 / DSM 40517 / JCM 4748 / NBRC 13426 / NCIMB 8594 / NRRL 2338).